A 192-amino-acid polypeptide reads, in one-letter code: Inner membrane protein YohD (192 aa).

The Periplasmic segment spans residues 1-40 (MDLNTLISQYGYAALVIGSLAEGETVTLLGGVAAHQGLLK). The chain crosses the membrane as a helical span at residues 41–61 (FPLVVLSVALGGMIGDQVLYL). Residues 62-121 (CGRRFGGKLLRRFSKHQDKIERAQKLIQRHPYLFVIGTRFMYGFRVIGPTLIGASQLPPK) lie on the Cytoplasmic side of the membrane. A helical transmembrane segment spans residues 122–142 (IFLPLNILGAFAWALIFTTIG). Over 143–159 (YAGGQVIAPWLHNLDQH) the chain is Periplasmic. Residues 160–180 (LKHWVWLILVVVLVVGVRWWL) traverse the membrane as a helical segment. The Cytoplasmic segment spans residues 181 to 192 (KRRGKKKPDHQA).

Belongs to the DedA family.

It localises to the cell inner membrane. This chain is Inner membrane protein YohD (yohD), found in Escherichia coli (strain K12).